Here is a 529-residue protein sequence, read N- to C-terminus: Bifunctional purine biosynthesis protein PurH (529 aa).

The MGS-like domain maps to 1 to 148 (MQQRRPVRRA…KNHKDVAIVV (148 aa)). Lys-287 carries the N6-acetyllysine modification.

It belongs to the PurH family.

It carries out the reaction (6R)-10-formyltetrahydrofolate + 5-amino-1-(5-phospho-beta-D-ribosyl)imidazole-4-carboxamide = 5-formamido-1-(5-phospho-D-ribosyl)imidazole-4-carboxamide + (6S)-5,6,7,8-tetrahydrofolate. The enzyme catalyses IMP + H2O = 5-formamido-1-(5-phospho-D-ribosyl)imidazole-4-carboxamide. Its pathway is purine metabolism; IMP biosynthesis via de novo pathway; 5-formamido-1-(5-phospho-D-ribosyl)imidazole-4-carboxamide from 5-amino-1-(5-phospho-D-ribosyl)imidazole-4-carboxamide (10-formyl THF route): step 1/1. The protein operates within purine metabolism; IMP biosynthesis via de novo pathway; IMP from 5-formamido-1-(5-phospho-D-ribosyl)imidazole-4-carboxamide: step 1/1. This chain is Bifunctional purine biosynthesis protein PurH, found in Escherichia coli O7:K1 (strain IAI39 / ExPEC).